Reading from the N-terminus, the 920-residue chain is 3-hydroxy-3-methylglutaryl-coenzyme A reductase (920 aa).

The chain crosses the membrane as a helical span at residues 12–32 (FCASHPWEVIVALLTITACML). N37 carries N-linked (GlcNAc...) asparagine glycosylation. The disordered stretch occupies residues 62–85 (GAGSGASGTIPPSSMGGSATSSRH). Positions 71–82 (IPPSSMGGSATS) are enriched in polar residues. The SSD domain occupies 106–263 (DVILMTIVRC…MTFYPACLSL (158 aa)). The next 5 membrane-spanning stretches (helical) occupy residues 107 to 129 (VILM…CSLH), 136 to 156 (VLGI…TAII), 170 to 190 (LFFL…QLAL), 208 to 228 (LLGP…GVGT), and 237 to 257 (VLCM…MTFY). N342 and N346 each carry an N-linked (GlcNAc...) asparagine glycan. The helical transmembrane segment at 364 to 384 (SADHIVISIVLIALVVKFICF) threads the bilayer. The tract at residues 385 to 498 (DNRDPLPDQL…EEIVSIVHAG (114 aa)) is linker. 2 N-linked (GlcNAc...) asparagine glycosylation sites follow: N443 and N475. Residues 499–829 (GTHCPLHKIE…TCTMPSLEVG (331 aa)) form a catalytic region. Active-site charge relay system residues include E586, K717, and D793. Residues N797 and N802 are each glycosylated (N-linked (GlcNAc...) asparagine). Catalysis depends on H892, which acts as the Proton donor. Residues N896 and N910 are each glycosylated (N-linked (GlcNAc...) asparagine).

This sequence belongs to the HMG-CoA reductase family. As to expression, highly expressed in embryonic gonadal mesoderm, where expression is initially broad, and then becomes restricted to a segmental pattern at stage 11. Expression is then further restricted to a cluster of cells in each of parasegments 10, 11 and 12, corresponding to the developing gonadal mesoderm. Not expressed in pole cells.

It localises to the endoplasmic reticulum membrane. The catalysed reaction is (R)-mevalonate + 2 NADP(+) + CoA = (3S)-3-hydroxy-3-methylglutaryl-CoA + 2 NADPH + 2 H(+). It participates in metabolic intermediate biosynthesis; (R)-mevalonate biosynthesis; (R)-mevalonate from acetyl-CoA: step 3/3. With respect to regulation, the activity of HMG-CoA-reductase is suppressed by exogenous mevalonate. Functionally, synthesis of mevalonate for the production of non-sterol isoprenoids, which are essential for growth differentiation. Provides spatial information during embryogenesis to guide migrating primordial germ cells (the pole cells) from the ectoderm to the mesoderm. Also required for association of the pole cells with the gonadal mesoderm. This chain is 3-hydroxy-3-methylglutaryl-coenzyme A reductase (Hmgcr), found in Drosophila melanogaster (Fruit fly).